Reading from the N-terminus, the 104-residue chain is Iron-sulfur cluster assembly protein CyaY (104 aa).

This sequence belongs to the frataxin family.

Involved in iron-sulfur (Fe-S) cluster assembly. May act as a regulator of Fe-S biogenesis. The protein is Iron-sulfur cluster assembly protein CyaY of Rickettsia prowazekii (strain Madrid E).